We begin with the raw amino-acid sequence, 747 residues long: DNA ligase (747 aa).

Residues 33 to 37, 83 to 84, and E113 contribute to the NAD(+) site; these read DEEYD and SL. The active-site N6-AMP-lysine intermediate is the K115. Residues R136, E174, K299, and K323 each coordinate NAD(+). The Zn(2+) site is built by C417, C420, C436, and C442. Residues 659-747 enclose the BRCT domain; it reads TGGGVLSGLT…GPGALPEVAE (89 aa).

The protein belongs to the NAD-dependent DNA ligase family. LigA subfamily. The cofactor is Mg(2+). It depends on Mn(2+) as a cofactor.

It catalyses the reaction NAD(+) + (deoxyribonucleotide)n-3'-hydroxyl + 5'-phospho-(deoxyribonucleotide)m = (deoxyribonucleotide)n+m + AMP + beta-nicotinamide D-nucleotide.. Its function is as follows. DNA ligase that catalyzes the formation of phosphodiester linkages between 5'-phosphoryl and 3'-hydroxyl groups in double-stranded DNA using NAD as a coenzyme and as the energy source for the reaction. It is essential for DNA replication and repair of damaged DNA. This chain is DNA ligase, found in Leifsonia xyli subsp. xyli (strain CTCB07).